The following is a 263-amino-acid chain: Flagellar brake protein YcgR (263 aa).

The tract at residues 1-21 (MAELSTPSPASPAPLDGGRGD) is disordered. In terms of domain architecture, PilZ spans 133–250 (QRREFYRLQV…DTRIQRYIFK (118 aa)).

The protein belongs to the YcgR family. As to quaternary structure, monomer. Interacts with the flagellar basal bodies.

It is found in the bacterial flagellum basal body. Functionally, acts as a flagellar brake, regulating swimming and swarming in a bis-(3'-5') cyclic diguanylic acid (c-di-GMP)-dependent manner. Binds 1 c-di-GMP dimer per subunit. Increasing levels of c-di-GMP lead to decreased motility. The chain is Flagellar brake protein YcgR from Thauera aminoaromatica.